Reading from the N-terminus, the 465-residue chain is MHAQRVARDLISGSPDEILGKILSFLPTHHAATTSVLSKRWRNLLPLVDKLELTEDHPSGRCSLGFPDFVEKTLALLDRPCSVIKKVHLNCDHLHGESRFYSWIRTVLERGVLDFHLESSRMYRVETEFFTSNTLVELTISGALYPEGELPPGGLFFPALKRLSIVLVAFADCDMYDDFVLGCPVLEELILYYADDDQPPGWNGKVSSPSIKRLTISHDYPDYPETHIYVWFDTPSLVYLDYSGHVARRYTAEMGSLEEARLNLLPWEQLIDSDEEDDDFDGYGPRWEKRSKDATGLIAMISNVKTLHLSSDSLEVIHSLCKVMPAFQNLLKLSFESDKERGWQVVPLLLNSSPNLETLVIKGLVHKVTSRCGDACLCIRKKTRGECCLLTCQVKVLKIIGYRGTCREQKQMSHFLANLKCLETVKVRVEVDHREDNDASNTYLRITNALMKLPRVSSNCRIHFL.

The 47-residue stretch at R8 to T54 folds into the F-box domain.

The chain is Putative F-box protein At1g21990 from Arabidopsis thaliana (Mouse-ear cress).